A 251-amino-acid polypeptide reads, in one-letter code: Pyrroloquinoline-quinone synthase (251 aa).

Belongs to the PqqC family.

The catalysed reaction is 6-(2-amino-2-carboxyethyl)-7,8-dioxo-1,2,3,4,7,8-hexahydroquinoline-2,4-dicarboxylate + 3 O2 = pyrroloquinoline quinone + 2 H2O2 + 2 H2O + H(+). Its pathway is cofactor biosynthesis; pyrroloquinoline quinone biosynthesis. Functionally, ring cyclization and eight-electron oxidation of 3a-(2-amino-2-carboxyethyl)-4,5-dioxo-4,5,6,7,8,9-hexahydroquinoline-7,9-dicarboxylic-acid to PQQ. The chain is Pyrroloquinoline-quinone synthase from Pseudomonas syringae pv. tomato (strain ATCC BAA-871 / DC3000).